We begin with the raw amino-acid sequence, 187 residues long: Coiled-coil domain-containing protein 201 (187 aa).

Disordered regions lie at residues 1-79 (MEPG…PPAT) and 92-159 (KESS…RAAA). A coiled-coil region spans residues 111–131 (LTQRQRQRQQQQQQQESLRAK). Over residues 147–157 (GRKRRDPKKRA) the composition is skewed to basic residues.

The chain is Coiled-coil domain-containing protein 201 from Homo sapiens (Human).